Here is a 188-residue protein sequence, read N- to C-terminus: Small ribosomal subunit protein uS7 (188 aa).

The protein belongs to the universal ribosomal protein uS7 family. As to quaternary structure, part of the 30S ribosomal subunit.

In terms of biological role, one of the primary rRNA binding proteins, it binds directly to 16S rRNA where it nucleates assembly of the head domain of the 30S subunit. Is located at the subunit interface close to the decoding center. The sequence is that of Small ribosomal subunit protein uS7 from Methanococcus maripaludis (strain C7 / ATCC BAA-1331).